We begin with the raw amino-acid sequence, 274 residues long: uncharacterized protein (274 aa).

Helical transmembrane passes span 9-29, 64-84, 135-155, 165-185, and 219-239; these read SLLLTEVAAYFTSTTLFVSIL, WFWHFYAFISLLNPLFTFFIL, LAGHYLLGYLFYTHTFLALLL, MSSMQFVGLGIYAIGSIWQNA, and IIVYTGIALIAQHWLIWLVLG.

This sequence belongs to the steroid 5-alpha reductase family.

The protein localises to the endoplasmic reticulum membrane. This is an uncharacterized protein from Schizosaccharomyces pombe (strain 972 / ATCC 24843) (Fission yeast).